The chain runs to 292 residues: 4-hydroxy-tetrahydrodipicolinate synthase (292 aa).

Thr45 serves as a coordination point for pyruvate. Tyr133 functions as the Proton donor/acceptor in the catalytic mechanism. Lys161 functions as the Schiff-base intermediate with substrate in the catalytic mechanism. Ile203 serves as a coordination point for pyruvate.

Belongs to the DapA family. In terms of assembly, homotetramer; dimer of dimers.

The protein resides in the cytoplasm. The catalysed reaction is L-aspartate 4-semialdehyde + pyruvate = (2S,4S)-4-hydroxy-2,3,4,5-tetrahydrodipicolinate + H2O + H(+). It functions in the pathway amino-acid biosynthesis; L-lysine biosynthesis via DAP pathway; (S)-tetrahydrodipicolinate from L-aspartate: step 3/4. Its function is as follows. Catalyzes the condensation of (S)-aspartate-beta-semialdehyde [(S)-ASA] and pyruvate to 4-hydroxy-tetrahydrodipicolinate (HTPA). The protein is 4-hydroxy-tetrahydrodipicolinate synthase of Nitrosomonas europaea (strain ATCC 19718 / CIP 103999 / KCTC 2705 / NBRC 14298).